We begin with the raw amino-acid sequence, 80 residues long: Acyl carrier protein (80 aa).

Positions glutamine 4 to leucine 79 constitute a Carrier domain. Serine 39 carries the post-translational modification O-(pantetheine 4'-phosphoryl)serine.

The protein belongs to the acyl carrier protein (ACP) family. In terms of processing, 4'-phosphopantetheine is transferred from CoA to a specific serine of apo-ACP by AcpS. This modification is essential for activity because fatty acids are bound in thioester linkage to the sulfhydryl of the prosthetic group.

The protein localises to the cytoplasm. It participates in lipid metabolism; fatty acid biosynthesis. In terms of biological role, carrier of the growing fatty acid chain in fatty acid biosynthesis. The polypeptide is Acyl carrier protein (Thermus thermophilus (strain ATCC BAA-163 / DSM 7039 / HB27)).